The primary structure comprises 151 residues: FAD synthase (151 aa).

ATP is bound by residues 21-22 (TF), 26-29 (HPGH), and Asp-104.

Belongs to the archaeal FAD synthase family. In terms of assembly, homodimer. A divalent metal cation is required as a cofactor.

It catalyses the reaction FMN + ATP + H(+) = FAD + diphosphate. It functions in the pathway cofactor biosynthesis; FAD biosynthesis; FAD from FMN: step 1/1. Catalyzes the transfer of the AMP portion of ATP to flavin mononucleotide (FMN) to produce flavin adenine dinucleotide (FAD) coenzyme. In Methanosarcina acetivorans (strain ATCC 35395 / DSM 2834 / JCM 12185 / C2A), this protein is FAD synthase.